The primary structure comprises 169 residues: uncharacterized protein (169 aa).

Residues 55–77 form a helical membrane-spanning segment; the sequence is SLFIFKAVMILHTCLIVKSIRIF.

It is found in the membrane. This is an uncharacterized protein from Saccharomyces cerevisiae (strain ATCC 204508 / S288c) (Baker's yeast).